Consider the following 495-residue polypeptide: Phosphomethylpyrimidine synthase (495 aa).

Residues N125, M154, Y183, H219, 239 to 241 (SRG), 280 to 283 (DGLR), and E319 contribute to the substrate site. Residue H323 coordinates Zn(2+). Residue Y346 participates in substrate binding. Residue H387 participates in Zn(2+) binding. Residues C467, C470, and C475 each contribute to the [4Fe-4S] cluster site.

Belongs to the ThiC family. The cofactor is [4Fe-4S] cluster.

It catalyses the reaction 5-amino-1-(5-phospho-beta-D-ribosyl)imidazole + S-adenosyl-L-methionine = 4-amino-2-methyl-5-(phosphooxymethyl)pyrimidine + CO + 5'-deoxyadenosine + formate + L-methionine + 3 H(+). Its pathway is cofactor biosynthesis; thiamine diphosphate biosynthesis. Functionally, catalyzes the synthesis of the hydroxymethylpyrimidine phosphate (HMP-P) moiety of thiamine from aminoimidazole ribotide (AIR) in a radical S-adenosyl-L-methionine (SAM)-dependent reaction. The sequence is that of Phosphomethylpyrimidine synthase from Leptospira interrogans serogroup Icterohaemorrhagiae serovar copenhageni (strain Fiocruz L1-130).